A 363-amino-acid chain; its full sequence is Anhydro-N-acetylmuramic acid kinase (363 aa).

10–17 serves as a coordination point for ATP; the sequence is GTSLDGLD.

Belongs to the anhydro-N-acetylmuramic acid kinase family.

It catalyses the reaction 1,6-anhydro-N-acetyl-beta-muramate + ATP + H2O = N-acetyl-D-muramate 6-phosphate + ADP + H(+). It participates in amino-sugar metabolism; 1,6-anhydro-N-acetylmuramate degradation. The protein operates within cell wall biogenesis; peptidoglycan recycling. Its function is as follows. Catalyzes the specific phosphorylation of 1,6-anhydro-N-acetylmuramic acid (anhMurNAc) with the simultaneous cleavage of the 1,6-anhydro ring, generating MurNAc-6-P. Is required for the utilization of anhMurNAc either imported from the medium or derived from its own cell wall murein, and thus plays a role in cell wall recycling. The chain is Anhydro-N-acetylmuramic acid kinase from Pseudomonas fluorescens (strain Pf0-1).